The sequence spans 157 residues: uncharacterized protein (157 aa).

The 146-residue stretch at 9–154 (LLINYKTLDE…ETNLNAVTNE (146 aa)) folds into the N-acetyltransferase domain.

This is an uncharacterized protein from Bacillus cereus (strain G9842).